The chain runs to 409 residues: F-box/kelch-repeat protein At1g48625 (409 aa).

Residues 2–49 form the F-box domain; sequence ATMISNLPRDLMEEILSRVPLKSMRAVRLTCKNWHTLSITISESLAKM. Kelch repeat units lie at residues 169–218 and 221–266; these read FIDY…LKGN and WCAR…ILSC.

This is F-box/kelch-repeat protein At1g48625 from Arabidopsis thaliana (Mouse-ear cress).